Consider the following 315-residue polypeptide: Glutaminase (315 aa).

Residues Ser70, Asn120, Glu166, Asn173, Tyr197, Tyr249, and Val267 each coordinate substrate.

It belongs to the glutaminase family. Homotetramer.

It carries out the reaction L-glutamine + H2O = L-glutamate + NH4(+). This chain is Glutaminase, found in Mesorhizobium japonicum (strain LMG 29417 / CECT 9101 / MAFF 303099) (Mesorhizobium loti (strain MAFF 303099)).